The primary structure comprises 263 residues: Trem-like transcript 4 protein (263 aa).

The first 28 residues, 1-28, serve as a signal peptide directing secretion; sequence MAWRYSQLLLVPVQLVFLASVCCPGVWG. The Ig-like V-type domain maps to 29 to 132; the sequence is STVSEELHRM…LREVTVLRNI (104 aa). Over 29–200 the chain is Extracellular; that stretch reads STVSEELHRM…GWTSPGLLVS (172 aa). Cys47 and Cys116 are oxidised to a cystine. Asn100 carries N-linked (GlcNAc...) asparagine glycosylation. Positions 168–191 are disordered; it reads SPEETTDSSINGTGHRNQSSSSPG. The chain crosses the membrane as a helical span at residues 201–221; it reads VQYGLLLLKALMLSVFCVLLC. The Cytoplasmic segment spans residues 222–263; it reads WRSGQGREYMAETMELSKLPHISKSLDTVSHISGYEKKANWY.

Interacts with TYROBP/DAP12. As to expression, predominantly expressed in spleen, with highest levels on selected populations of macrophages, including red pulp macrophages, and on subsets of dendritic cells (DC), mostly on CD8alpha(+) DC (at protein level). Also expressed on blood and spleen Ly6C(low) monocytes (at protein level). Not expressed on lymphocytes or granulocytes (at protein level).

The protein resides in the cell membrane. Its function is as follows. Positively regulates Toll-like receptor signaling via TLR7, TLR9 and TLR13 in neutrophils and splenic macrophages. Regulates TLR7 signaling by controlling ligand-induced recruitment of TLR7 from the endoplasmic reticulum to endosomes and lysosomes. Positively regulates Toll-like receptor TLR9-induced production of inflammatory cytokines but is dispensable for IFNB1 production. Involved in the anti-viral response to several viruses including influenza virus, vesicular stomatitis virus and cytomegalovirus. Binds to late apoptotic, and necrotic cells, but not living or early apoptotic cells, but is not essential for uptake of dying cells by dendritic cells (DCs). Does not bind nucleic acids. May participate in antigen presentation. The protein is Trem-like transcript 4 protein (Treml4) of Mus musculus (Mouse).